A 544-amino-acid polypeptide reads, in one-letter code: Chaperonin GroEL 2 (544 aa).

ATP contacts are provided by residues 29 to 32 (TLGP), 86 to 90 (DGTTT), G413, 482 to 484 (NVL), and D498.

This sequence belongs to the chaperonin (HSP60) family. As to quaternary structure, forms a cylinder of 14 subunits composed of two heptameric rings stacked back-to-back. Interacts with the co-chaperonin GroES.

It is found in the cytoplasm. It carries out the reaction ATP + H2O + a folded polypeptide = ADP + phosphate + an unfolded polypeptide.. Its function is as follows. Together with its co-chaperonin GroES, plays an essential role in assisting protein folding. The GroEL-GroES system forms a nano-cage that allows encapsulation of the non-native substrate proteins and provides a physical environment optimized to promote and accelerate protein folding. In Roseiflexus sp. (strain RS-1), this protein is Chaperonin GroEL 2.